Consider the following 155-residue polypeptide: Large ribosomal subunit protein eL24A (155 aa).

A Phosphoserine modification is found at Ser7. The disordered stretch occupies residues 66–155 (EVAKKRSRKT…AFQKVAATSR (90 aa)). Basic and acidic residues predominate over residues 89–129 (LIKERRSLKPEVRKANREEKLKANKEKKKAEKAARKAEKAK). Positions 131–142 (AGTQSSKFSKQQ) are enriched in polar residues.

It belongs to the eukaryotic ribosomal protein eL24 family. Component of the large ribosomal subunit (LSU). Mature yeast ribosomes consist of a small (40S) and a large (60S) subunit. The 40S small subunit contains 1 molecule of ribosomal RNA (18S rRNA) and 33 different proteins (encoded by 57 genes). The large 60S subunit contains 3 rRNA molecules (25S, 5.8S and 5S rRNA) and 46 different proteins (encoded by 81 genes).

The protein resides in the cytoplasm. Its function is as follows. Component of the ribosome, a large ribonucleoprotein complex responsible for the synthesis of proteins in the cell. The small ribosomal subunit (SSU) binds messenger RNAs (mRNAs) and translates the encoded message by selecting cognate aminoacyl-transfer RNA (tRNA) molecules. The large subunit (LSU) contains the ribosomal catalytic site termed the peptidyl transferase center (PTC), which catalyzes the formation of peptide bonds, thereby polymerizing the amino acids delivered by tRNAs into a polypeptide chain. The nascent polypeptides leave the ribosome through a tunnel in the LSU and interact with protein factors that function in enzymatic processing, targeting, and the membrane insertion of nascent chains at the exit of the ribosomal tunnel. The polypeptide is Large ribosomal subunit protein eL24A (Saccharomyces cerevisiae (strain ATCC 204508 / S288c) (Baker's yeast)).